The sequence spans 491 residues: Aspartyl/glutamyl-tRNA(Asn/Gln) amidotransferase subunit B (491 aa).

This sequence belongs to the GatB/GatE family. GatB subfamily. Heterotrimer of A, B and C subunits.

The catalysed reaction is L-glutamyl-tRNA(Gln) + L-glutamine + ATP + H2O = L-glutaminyl-tRNA(Gln) + L-glutamate + ADP + phosphate + H(+). It carries out the reaction L-aspartyl-tRNA(Asn) + L-glutamine + ATP + H2O = L-asparaginyl-tRNA(Asn) + L-glutamate + ADP + phosphate + 2 H(+). Functionally, allows the formation of correctly charged Asn-tRNA(Asn) or Gln-tRNA(Gln) through the transamidation of misacylated Asp-tRNA(Asn) or Glu-tRNA(Gln) in organisms which lack either or both of asparaginyl-tRNA or glutaminyl-tRNA synthetases. The reaction takes place in the presence of glutamine and ATP through an activated phospho-Asp-tRNA(Asn) or phospho-Glu-tRNA(Gln). The protein is Aspartyl/glutamyl-tRNA(Asn/Gln) amidotransferase subunit B of Paraburkholderia xenovorans (strain LB400).